Consider the following 313-residue polypeptide: Cytochrome c biogenesis protein CcsA (313 aa).

Transmembrane regions (helical) follow at residues 9–29 (ILTH…LITF), 44–64 (GIIV…ISSG), 71–91 (LYES…IPYF), 111–131 (GFAT…VPAL), 143–163 (MILG…LLVI), 217–237 (VISL…VWAN), 244–264 (WNWD…AIYL), and 278–298 (AIVA…VNLL).

This sequence belongs to the CcmF/CycK/Ccl1/NrfE/CcsA family. As to quaternary structure, may interact with Ccs1.

The protein localises to the plastid. It localises to the chloroplast thylakoid membrane. Functionally, required during biogenesis of c-type cytochromes (cytochrome c6 and cytochrome f) at the step of heme attachment. The protein is Cytochrome c biogenesis protein CcsA of Solanum bulbocastanum (Wild potato).